The chain runs to 246 residues: 23S rRNA (guanosine-2'-O-)-methyltransferase RlmB (246 aa).

3 residues coordinate S-adenosyl-L-methionine: Gly197, Ile217, and Leu226.

This sequence belongs to the class IV-like SAM-binding methyltransferase superfamily. RNA methyltransferase TrmH family. RlmB subfamily.

The protein localises to the cytoplasm. It catalyses the reaction guanosine(2251) in 23S rRNA + S-adenosyl-L-methionine = 2'-O-methylguanosine(2251) in 23S rRNA + S-adenosyl-L-homocysteine + H(+). Its function is as follows. Specifically methylates the ribose of guanosine 2251 in 23S rRNA. The chain is 23S rRNA (guanosine-2'-O-)-methyltransferase RlmB from Haemophilus influenzae (strain ATCC 51907 / DSM 11121 / KW20 / Rd).